A 1851-amino-acid chain; its full sequence is Chitin synthase (1851 aa).

Residues 1–21 (MQYHQHQHQFPGPGPSHTSVY) are disordered. Residues 1–108 (MQYHQHQHQF…KDTLYNGFLQ (108 aa)) lie on the Cytoplasmic side of the membrane. The chain crosses the membrane as a helical span at residues 109–129 (VLKMITFVALFVTTLGSSILA). The Extracellular portion of the chain corresponds to 130–168 (KLSLLVMAAGLGQAGHNISICPDKIPESPKNSVLISPKN). A glycan (N-linked (GlcNAc...) asparagine) is linked at N146. The helical transmembrane segment at 169–189 (AAKWAWALLLAICIPELLCFA) threads the bilayer. The Cytoplasmic portion of the chain corresponds to 190 to 208 (RSLHRSLFRKVRGPSFLQF). The chain crosses the membrane as a helical span at residues 209–229 (LLVFTVESVHAFGLGALVFAI). Residues 230–234 (MPRGM) are Extracellular-facing. Residues 235-255 (VITMLQLGNSLCLIPSLLLPL) traverse the membrane as a helical segment. The Cytoplasmic segment spans residues 256-261 (SRSRSR). A helical membrane pass occupies residues 262 to 282 (WLPLLLLLDGSAILAQSSAAI). Residues 283 to 291 (WRGSIPLER) lie on the Extracellular side of the membrane. A helical transmembrane segment spans residues 292–312 (FGFVFLCTSLISIAWWQNFVH). At 313–337 (PHSFLPATRFFAHYAAKLRECRSKT) the chain is on the cytoplasmic side. A helical transmembrane segment spans residues 338–358 (FVVLSPWKCLIFTFCMFQFVP). Residues 359-544 (PQIPFRELLQ…ELNQFTTAND (186 aa)) are Extracellular-facing. N385 and N435 each carry an N-linked (GlcNAc...) asparagine glycan. Positions 432 to 522 (LFRNGTRRPP…DADEQEEEEE (91 aa)) are disordered. Positions 442–454 (KKEEVKKNKMDSK) are enriched in basic and acidic residues. Basic residues predominate over residues 455–465 (KKTKKLKKKKG). The segment covering 466–478 (GNNNATSTNSSEK) has biased composition (low complexity). N-linked (GlcNAc...) asparagine glycosylation is found at N469 and N474. Residues 513–522 (DADEQEEEEE) show a composition bias toward acidic residues. The chain crosses the membrane as a helical span at residues 545-565 (ALWLVFVQAGSVLLCQLCAKF). The Cytoplasmic segment spans residues 566–573 (ACKVVMQR). The chain crosses the membrane as a helical span at residues 574 to 594 (VGLALPVVLSIPFGILFLAYS). The Extracellular portion of the chain corresponds to 595–631 (CRQKATNPCHLSEWMSKELFWQCPTRPFHWQRFFREQ). A helical membrane pass occupies residues 632-652 (PNLLWLCWWLSQCWITIHLWL). Topologically, residues 653-1124 (PRQERLAKSE…VSIWYIAYQL (472 aa)) are cytoplasmic. Positions 693–718 (SEDIDTEEEANEGGGEQEDGNSSTHT) are disordered. The span at 696–711 (IDTEEEANEGGGEQED) shows a compositional bias: acidic residues. Residues 1125–1145 (VMLFSSVLGPGTIFLMIVGAI) traverse the membrane as a helical segment. The Extracellular segment spans residues 1146–1154 (SISFNIDTR). The chain crosses the membrane as a helical span at residues 1155–1175 (LALLIVTTPVLCFCVCCLTCG). Residues 1176-1179 (TETQ) lie on the Cytoplasmic side of the membrane. Residues 1180–1200 (LLLAQVIGALFAMLMTAVIVG) form a helical membrane-spanning segment. Topologically, residues 1201-1209 (TSLQIQKDG) are extracellular. A helical transmembrane segment spans residues 1210–1230 (LLSPHSIFLFTVLGSWSFSAL). The Cytoplasmic portion of the chain corresponds to 1231-1235 (LHPLE). A helical transmembrane segment spans residues 1236-1256 (FGCLLPCGLYFLAIPCMYMLL). Over 1257–1461 (PVYSLCNLNT…QRGLNELRNT (205 aa)) the chain is Extracellular. An N-linked (GlcNAc...) asparagine glycan is attached at N1274. The stretch at 1329-1383 (CADETVEVRKLDENFRKIERKLQSLERRTNGQGNNAEEEGKEEEETGKSEQERKE) forms a coiled coil. The interval 1350–1402 (LQSLERRTNGQGNNAEEEGKEEEETGKSEQERKEGREEGKEEEGKMSKRKKEE) is disordered. Acidic residues predominate over residues 1364–1373 (AEEEGKEEEE). A compositionally biased stretch (basic and acidic residues) spans 1374–1402 (TGKSEQERKEGREEGKEEEGKMSKRKKEE). A helical transmembrane segment spans residues 1462 to 1482 (CCSAFFMVNIVFIIVVLVLQL). Residues 1483–1527 (QKDCLHIEWPLGPLVNQTRVQCGGGGGRDFEGEEWIMSRLQLEPM) are Cytoplasmic-facing. The helical transmembrane segment at 1528-1548 (GFVFIVFFLIILFIQFLAMLF) threads the bilayer. Residues 1549–1851 (HRFGTFTHII…FLGTTNKRAK (303 aa)) are Extracellular-facing. The tract at residues 1626–1658 (GKRQQNAQIPPRCEKGGNERGEESPTSLPAPPV) is disordered. Residues 1637–1648 (RCEKGGNERGEE) show a composition bias toward basic and acidic residues. N1660 carries an N-linked (GlcNAc...) asparagine glycan. The segment at 1765–1851 (HSIFPSSSES…FLGTTNKRAK (87 aa)) is disordered. Residues 1781–1822 (GGGRGRGREQERDKCLEGKKEKFRQRVEEGPARCHRLEELFG) show a composition bias toward basic and acidic residues. Over residues 1823-1834 (KSRKGGPQKRGK) the composition is skewed to basic residues.

It belongs to the chitin synthase family. Class IV subfamily. In terms of processing, may require proteolytic cleavage for activation.

It is found in the cell membrane. The catalysed reaction is [(1-&gt;4)-N-acetyl-beta-D-glucosaminyl](n) + UDP-N-acetyl-alpha-D-glucosamine = [(1-&gt;4)-N-acetyl-beta-D-glucosaminyl](n+1) + UDP + H(+). In terms of biological role, required for the synthesis of chitin. The sequence is that of Chitin synthase from Meloidogyne artiellia (British root-knot nematode).